Consider the following 135-residue polypeptide: Large ribosomal subunit protein uL16 (135 aa).

The protein belongs to the universal ribosomal protein uL16 family. Part of the 50S ribosomal subunit.

In terms of biological role, binds 23S rRNA and is also seen to make contacts with the A and possibly P site tRNAs. The protein is Large ribosomal subunit protein uL16 of Desulfatibacillum aliphaticivorans.